The sequence spans 468 residues: Glutamate--tRNA ligase 2 (468 aa).

Positions 11 to 21 (PSPTGFLHIGG) match the 'HIGH' region motif. Residues 239-243 (KLSKR) carry the 'KMSKS' region motif. Lys-242 provides a ligand contact to ATP.

This sequence belongs to the class-I aminoacyl-tRNA synthetase family. Glutamate--tRNA ligase type 1 subfamily. Monomer.

Its subcellular location is the cytoplasm. The catalysed reaction is tRNA(Glu) + L-glutamate + ATP = L-glutamyl-tRNA(Glu) + AMP + diphosphate. In terms of biological role, catalyzes the attachment of glutamate to tRNA(Glu) in a two-step reaction: glutamate is first activated by ATP to form Glu-AMP and then transferred to the acceptor end of tRNA(Glu). The protein is Glutamate--tRNA ligase 2 of Ruegeria pomeroyi (strain ATCC 700808 / DSM 15171 / DSS-3) (Silicibacter pomeroyi).